Consider the following 461-residue polypeptide: Cysteine--tRNA ligase (461 aa).

C30 contacts Zn(2+). The short motif at P32–N42 is the 'HIGH' region element. 3 residues coordinate Zn(2+): C212, H237, and E241. The 'KMSKS' region signature appears at K270 to S274. An ATP-binding site is contributed by K273.

Belongs to the class-I aminoacyl-tRNA synthetase family. As to quaternary structure, monomer. Zn(2+) serves as cofactor.

The protein resides in the cytoplasm. It catalyses the reaction tRNA(Cys) + L-cysteine + ATP = L-cysteinyl-tRNA(Cys) + AMP + diphosphate. The polypeptide is Cysteine--tRNA ligase (Maricaulis maris (strain MCS10) (Caulobacter maris)).